We begin with the raw amino-acid sequence, 309 residues long: Foldase protein PrsA (309 aa).

Residues 1-22 form the signal peptide; it reads MKTRSKLAAGFLTLMSVATLAA. The N-palmitoyl cysteine moiety is linked to residue Cys23. Cys23 carries the S-diacylglycerol cysteine lipid modification. Residues 146–241 form the PpiC domain; it reads TPETSVQVIK…TSYYIIKVTD (96 aa).

The protein belongs to the PrsA family.

Its subcellular location is the cell membrane. The catalysed reaction is [protein]-peptidylproline (omega=180) = [protein]-peptidylproline (omega=0). Its function is as follows. Plays a major role in protein secretion by helping the post-translocational extracellular folding of several secreted proteins. The chain is Foldase protein PrsA from Streptococcus agalactiae serotype Ia (strain ATCC 27591 / A909 / CDC SS700).